A 432-amino-acid chain; its full sequence is Trigger factor (432 aa).

Residues 161 to 246 enclose the PPIase FKBP-type domain; the sequence is EDRVTIDFTG…LKKVEERGLP (86 aa).

This sequence belongs to the FKBP-type PPIase family. Tig subfamily.

It localises to the cytoplasm. It carries out the reaction [protein]-peptidylproline (omega=180) = [protein]-peptidylproline (omega=0). In terms of biological role, involved in protein export. Acts as a chaperone by maintaining the newly synthesized protein in an open conformation. Functions as a peptidyl-prolyl cis-trans isomerase. This Salmonella choleraesuis (strain SC-B67) protein is Trigger factor.